Here is a 105-residue protein sequence, read N- to C-terminus: Large ribosomal subunit protein bL21 (105 aa).

The protein belongs to the bacterial ribosomal protein bL21 family. As to quaternary structure, part of the 50S ribosomal subunit. Contacts protein L20.

Functionally, this protein binds to 23S rRNA in the presence of protein L20. This chain is Large ribosomal subunit protein bL21, found in Rhizobium etli (strain CIAT 652).